The chain runs to 240 residues: tRNA pseudouridine synthase A (240 aa).

D50 (nucleophile) is an active-site residue. Substrate is bound at residue Y109.

The protein belongs to the tRNA pseudouridine synthase TruA family. Homodimer.

It carries out the reaction uridine(38/39/40) in tRNA = pseudouridine(38/39/40) in tRNA. Its function is as follows. Formation of pseudouridine at positions 38, 39 and 40 in the anticodon stem and loop of transfer RNAs. This chain is tRNA pseudouridine synthase A, found in Campylobacter jejuni subsp. jejuni serotype O:6 (strain 81116 / NCTC 11828).